Consider the following 107-residue polypeptide: Anti-adapter protein IraM (107 aa).

This sequence belongs to the IraM/RssC family.

It is found in the cytoplasm. Its function is as follows. Inhibits RpoS proteolysis by regulating RssB activity, thereby increasing the stability of the sigma stress factor RpoS during magnesium starvation. In Escherichia coli (strain 55989 / EAEC), this protein is Anti-adapter protein IraM.